The primary structure comprises 307 residues: Aspartate carbamoyltransferase catalytic subunit (307 aa).

Positions 55 and 56 each coordinate carbamoyl phosphate. Residue K85 coordinates L-aspartate. The carbamoyl phosphate site is built by R106, H135, and Q138. Residues R168 and R230 each coordinate L-aspartate. Carbamoyl phosphate is bound by residues L268 and P269.

This sequence belongs to the aspartate/ornithine carbamoyltransferase superfamily. ATCase family. Heterododecamer (2C3:3R2) of six catalytic PyrB chains organized as two trimers (C3), and six regulatory PyrI chains organized as three dimers (R2).

The catalysed reaction is carbamoyl phosphate + L-aspartate = N-carbamoyl-L-aspartate + phosphate + H(+). It participates in pyrimidine metabolism; UMP biosynthesis via de novo pathway; (S)-dihydroorotate from bicarbonate: step 2/3. Its function is as follows. Catalyzes the condensation of carbamoyl phosphate and aspartate to form carbamoyl aspartate and inorganic phosphate, the committed step in the de novo pyrimidine nucleotide biosynthesis pathway. The sequence is that of Aspartate carbamoyltransferase catalytic subunit from Photorhabdus laumondii subsp. laumondii (strain DSM 15139 / CIP 105565 / TT01) (Photorhabdus luminescens subsp. laumondii).